Here is a 238-residue protein sequence, read N- to C-terminus: uncharacterized protein (238 aa).

5 consecutive transmembrane segments (helical) span residues 6 to 26 (METLIRLFVSILIICVLALMI), 45 to 65 (FILLYFCGFKYLILLLSFFIL), 98 to 118 (IPILFAILAIFGFNWALIGYI), 160 to 180 (IFGTLAGVLGAFLIGLFGYLL), and 186 to 206 (IVLCGTAGGIAGNLADSLVGA).

Belongs to the TMEM19 family.

It localises to the cell membrane. This is an uncharacterized protein from Methanocaldococcus jannaschii (strain ATCC 43067 / DSM 2661 / JAL-1 / JCM 10045 / NBRC 100440) (Methanococcus jannaschii).